The primary structure comprises 531 residues: MKPTSGPEEARRPASDIRVFASNCSMHGLGHVFGPGSLSLRRGMWAAAVVLSVATFLYQVAERVRYYREFHHQTALDERESHRLIFPAVTLCNINPLRRSRLTPNDLHWAGSALLGLDPAEHAAFLRALGRPPAPPGFMPSPTFDMAQLYARAGHSLDDMLLDCRFRGQPCGPENFTTIFTRMGKCYTFNSGADGAELLTTTRGGMGNGLDIMLDVQQEEYLPVWRDNEETPFEVGIRVQIHSQEEPPIIDQLGLGVSPGYQTFVSCQQQQLSFLPPPWGDCSSASLNPNYEPEPSDPLGSPSPSPSPPYTLMGCRLACETRYVARKCGCRMVYMPGDVPVCSPQQYKNCAHPAIDAMLRKDSCACPNPCASTRYAKELSMVRIPSRAAARFLARKLNRSEAYIAENVLALDIFFEALNYETVEQKKAYEMSELLGDIGGQMGLFIGASLLTILEILDYLCEVFRDKVLGYFWNRQHSQRHSSTNLLQEGLGSHRTQVPHLSLGPRPPTPPCAVTKTLSASHRTCYLVTQL.

Residues 1 to 43 are Cytoplasmic-facing; that stretch reads MKPTSGPEEARRPASDIRVFASNCSMHGLGHVFGPGSLSLRRG. Residues 44 to 61 traverse the membrane as a helical segment; the sequence is MWAAAVVLSVATFLYQVA. Residues 62-441 lie on the Extracellular side of the membrane; that stretch reads ERVRYYREFH…SELLGDIGGQ (380 aa). 7 cysteine pairs are disulfide-bonded: Cys-92-Cys-186, Cys-164-Cys-171, Cys-282-Cys-370, Cys-315-Cys-366, Cys-319-Cys-364, Cys-328-Cys-350, and Cys-330-Cys-342. A glycan (N-linked (GlcNAc...) asparagine) is linked at Asn-175. A disordered region spans residues 285-307; the sequence is ASLNPNYEPEPSDPLGSPSPSPS. N-linked (GlcNAc...) asparagine glycosylation occurs at Asn-398. Residues 442–460 form a helical membrane-spanning segment; the sequence is MGLFIGASLLTILEILDYL. The short motif at 447-449 is the GAS motif; ion selectivity filter element; sequence GAS. Residues 461–531 are Cytoplasmic-facing; the sequence is CEVFRDKVLG…HRTCYLVTQL (71 aa). A PDZ-binding motif is present at residues 528–531; sequence VTQL.

It belongs to the amiloride-sensitive sodium channel (TC 1.A.6) family. ASIC3 subfamily. As to quaternary structure, can form homotrimeric channels. Heterotrimer; forms functional heterotrimers producing channel with different properties. Forms heterotrimers with ASIC2; gives rise to a biphasic current with a sustained current which discriminates poorly between Na(+) and K(+). Interacts with STOM; inhibits ASIC3 acid-evoked current. Interacts with LIN7B (via PDZ domain); increases ASIC3 expression at the plasma membrane. Interacts with MAGI1 (via PDZ domain); probably regulates ASIC3. Interacts with GOPC (via PDZ domain); probably regulates ASIC3. Interacts with DLG4 (via PDZ domain); reduces ASIC3 expression at the plasma membrane. In terms of tissue distribution, expressed by sensory neurons. Strongly expressed in brain, spinal cord, lung, lymph nodes, kidney, pituitary, heart and testis.

Its subcellular location is the cell membrane. The protein localises to the cytoplasm. It catalyses the reaction Na(+)(in) = Na(+)(out). The catalysed reaction is K(+)(in) = K(+)(out). The enzyme catalyses Ca(2+)(in) = Ca(2+)(out). Inhibited by the diuretic drug amiloride. Inhibited by the diuretic drug triamterene. Potentiated by the vertebrate neuropeptide FF (NPFF) and the related FMRFamide. Specifically and reversibly inhibited by the a sea anemone toxin APETx2. Its function is as follows. Forms pH-gated heterotrimeric sodium channels that act as postsynaptic excitatory receptors in the nervous system. Upon extracellular acidification, these channels generate a biphasic current with a fast inactivating and a slow sustained phase. ASIC3 is more sensitive to protons and gates between closed, open, and desensitized states faster than other ASICs. Displays high selectivity for sodium ions but can also permit the permeation of other cations. As a neuronal acid sensor, probably contributes to mechanoreception, acid nociception, and heat nociception. By forming heterotrimeric channels with ASIC2, generates a biphasic current with a fast inactivating and a slow sustained phase, which in sensory neurons is proposed to mediate the pain induced by acidosis that occurs in ischemic, damaged or inflamed tissues. This is Acid-sensing ion channel 3 from Homo sapiens (Human).